The sequence spans 461 residues: Argininosuccinate lyase (461 aa).

This sequence belongs to the lyase 1 family. Argininosuccinate lyase subfamily.

It is found in the cytoplasm. The catalysed reaction is 2-(N(omega)-L-arginino)succinate = fumarate + L-arginine. It functions in the pathway amino-acid biosynthesis; L-arginine biosynthesis; L-arginine from L-ornithine and carbamoyl phosphate: step 3/3. The polypeptide is Argininosuccinate lyase (Clostridium beijerinckii (strain ATCC 51743 / NCIMB 8052) (Clostridium acetobutylicum)).